We begin with the raw amino-acid sequence, 265 residues long: Tryptophan synthase alpha chain (265 aa).

Catalysis depends on proton acceptor residues Glu-47 and Asp-58.

It belongs to the TrpA family. In terms of assembly, tetramer of two alpha and two beta chains.

The enzyme catalyses (1S,2R)-1-C-(indol-3-yl)glycerol 3-phosphate + L-serine = D-glyceraldehyde 3-phosphate + L-tryptophan + H2O. The protein operates within amino-acid biosynthesis; L-tryptophan biosynthesis; L-tryptophan from chorismate: step 5/5. Its function is as follows. The alpha subunit is responsible for the aldol cleavage of indoleglycerol phosphate to indole and glyceraldehyde 3-phosphate. In Methanoregula boonei (strain DSM 21154 / JCM 14090 / 6A8), this protein is Tryptophan synthase alpha chain.